Here is a 121-residue protein sequence, read N- to C-terminus: Heme-degrading monooxygenase (121 aa).

One can recognise an ABM domain in the interval isoleucine 2–valine 101. A Fe cation-binding site is contributed by asparagine 6. The interval lysine 76–lysine 98 is disordered. Residues aspartate 78 to lysine 98 show a composition bias toward basic and acidic residues. Histidine 84 contributes to the heme binding site.

Belongs to the antibiotic biosynthesis monooxygenase family. Heme-degrading monooxygenase IsdG subfamily. As to quaternary structure, homodimer.

It localises to the cytoplasm. The enzyme catalyses heme b + 3 reduced [NADPH--hemoprotein reductase] + 3 O2 = biliverdin IXalpha + CO + Fe(2+) + 3 oxidized [NADPH--hemoprotein reductase] + 3 H2O + H(+). In terms of biological role, allows bacterial pathogens to use the host heme as an iron source. Catalyzes the oxidative degradation of the heme macrocyclic porphyrin ring to the biliverdin in the presence of a suitable electron donor such as ascorbate or NADPH--cytochrome P450 reductase, with subsequent release of free iron. This chain is Heme-degrading monooxygenase, found in Listeria welshimeri serovar 6b (strain ATCC 35897 / DSM 20650 / CCUG 15529 / CIP 8149 / NCTC 11857 / SLCC 5334 / V8).